The following is a 603-amino-acid chain: Probable methyltransferase-like protein 25 (603 aa).

Residues 326–352 form a disordered region; it reads TSSQQIPNRETSEANKERRKMTSKSSE.

Its function is as follows. Probable methyltransferase. The polypeptide is Probable methyltransferase-like protein 25 (METTL25) (Homo sapiens (Human)).